A 467-amino-acid chain; its full sequence is UDP-N-acetylmuramate--L-alanine ligase (467 aa).

An ATP-binding site is contributed by 112–118; sequence GTHGKTT.

This sequence belongs to the MurCDEF family.

It localises to the cytoplasm. The catalysed reaction is UDP-N-acetyl-alpha-D-muramate + L-alanine + ATP = UDP-N-acetyl-alpha-D-muramoyl-L-alanine + ADP + phosphate + H(+). The protein operates within cell wall biogenesis; peptidoglycan biosynthesis. Its function is as follows. Cell wall formation. The sequence is that of UDP-N-acetylmuramate--L-alanine ligase from Azoarcus sp. (strain BH72).